A 676-amino-acid polypeptide reads, in one-letter code: Methionine--tRNA ligase (676 aa).

A 'HIGH' region motif is present at residues 15–25; that stretch reads PYANGPIHLGH. Residues Cys146, Cys149, Cys159, and Cys162 each contribute to the Zn(2+) site. The 'KMSKS' region motif lies at 332 to 336; sequence KMSKS. ATP is bound at residue Lys335. One can recognise a tRNA-binding domain in the interval 575–676; it reads DFAKIDLRIA…EGAQPGMRVK (102 aa).

The protein belongs to the class-I aminoacyl-tRNA synthetase family. MetG type 1 subfamily. In terms of assembly, homodimer. Zn(2+) is required as a cofactor.

The protein localises to the cytoplasm. It catalyses the reaction tRNA(Met) + L-methionine + ATP = L-methionyl-tRNA(Met) + AMP + diphosphate. Is required not only for elongation of protein synthesis but also for the initiation of all mRNA translation through initiator tRNA(fMet) aminoacylation. The protein is Methionine--tRNA ligase of Shewanella sp. (strain MR-4).